A 422-amino-acid polypeptide reads, in one-letter code: Metallocarboxypeptidase A (422 aa).

The signal sequence occupies residues 1 to 17 (MRSVLSLALLAANVVTA). Residues 18-112 (AVVSPFDYSG…FEAYSAGYAP (95 aa)) constitute a propeptide, activation peptide. In terms of domain architecture, Peptidase M14 spans 119 to 419 (SYHSYQDHLS…AGTVAMLKAV (301 aa)). Zn(2+) contacts are provided by His179 and Glu182. Substrate is bound by residues 179 to 182 (HARE), Arg237, and 254 to 255 (NR). Residues Cys248 and Cys271 are joined by a disulfide bond. His309 is a Zn(2+) binding site. Position 310–311 (310–311 (SY)) interacts with substrate. The active-site Proton donor/acceptor is the Glu385.

The protein belongs to the peptidase M14 family. It depends on Zn(2+) as a cofactor.

The protein resides in the secreted. Extracellular metalloprotease that contributes to pathogenicity. The polypeptide is Metallocarboxypeptidase A (MCPA) (Trichophyton rubrum (Athlete's foot fungus)).